Consider the following 228-residue polypeptide: Glutamate transport system permease protein GluC (228 aa).

A run of 4 helical transmembrane segments spans residues 16 to 36, 64 to 84, 100 to 120, and 195 to 215; these read FWVT…LGTI, LTLV…LTLA, AVLG…RSGI, and LFVV…PMGL. An ABC transmembrane type-1 domain is found at 16-217; sequence FWVTIQLTVY…ILTLPMGLGL (202 aa).

This sequence belongs to the binding-protein-dependent transport system permease family. HisMQ subfamily. In terms of assembly, the complex is composed of two ATP-binding proteins (GluA), two transmembrane proteins (GluC and GluD) and a solute-binding protein (GluB).

Its subcellular location is the cell membrane. Part of the ABC transporter complex GluABCD involved in glutamate uptake. Probably responsible for the translocation of the substrate across the membrane. The protein is Glutamate transport system permease protein GluC of Corynebacterium efficiens (strain DSM 44549 / YS-314 / AJ 12310 / JCM 11189 / NBRC 100395).